The chain runs to 258 residues: Small ribosomal subunit protein mS23 (258 aa).

Residues 230 to 239 (KKNSTKQSWA) are compositionally biased toward polar residues. Residues 230 to 258 (KKNSTKQSWAEATEEKEEQDSAEPEELKL) are disordered. Residues 241–258 (ATEEKEEQDSAEPEELKL) are compositionally biased toward acidic residues.

It belongs to the mitochondrion-specific ribosomal protein mS23 family. As to quaternary structure, component of the mitochondrial small ribosomal subunit.

It localises to the mitochondrion. This chain is Small ribosomal subunit protein mS23 (RSM25), found in Eremothecium gossypii (strain ATCC 10895 / CBS 109.51 / FGSC 9923 / NRRL Y-1056) (Yeast).